The chain runs to 355 residues: Protein-glutamate methylesterase/protein-glutamine glutaminase (355 aa).

The region spanning 7-123 is the Response regulatory domain; sequence AAVVVDDSQF…SVGIKQQQDE (117 aa). Aspartate 57 carries the 4-aspartylphosphate modification. Residues 139-159 are disordered; sequence TEAAAERTTSTATSTTTSRSA. The region spanning 161-355 is the CheB-type methylesterase domain; it reads EYVDKPTLVI…DGVLDTIMRE (195 aa). Active-site residues include serine 173, histidine 200, and aspartate 297.

This sequence belongs to the CheB family. Phosphorylated by CheA. Phosphorylation of the N-terminal regulatory domain activates the methylesterase activity.

The protein localises to the cytoplasm. It catalyses the reaction [protein]-L-glutamate 5-O-methyl ester + H2O = L-glutamyl-[protein] + methanol + H(+). The enzyme catalyses L-glutaminyl-[protein] + H2O = L-glutamyl-[protein] + NH4(+). Involved in chemotaxis. Part of a chemotaxis signal transduction system that modulates chemotaxis in response to various stimuli. Catalyzes the demethylation of specific methylglutamate residues introduced into the chemoreceptors (methyl-accepting chemotaxis proteins or MCP) by CheR. Also mediates the irreversible deamidation of specific glutamine residues to glutamic acid. The sequence is that of Protein-glutamate methylesterase/protein-glutamine glutaminase from Natronomonas pharaonis (strain ATCC 35678 / DSM 2160 / CIP 103997 / JCM 8858 / NBRC 14720 / NCIMB 2260 / Gabara) (Halobacterium pharaonis).